The chain runs to 518 residues: Serine/threonine-protein kinase PRR1 (518 aa).

Methionine 1 carries the N-acetylmethionine modification. Residues 1–12 show a composition bias toward polar residues; sequence MDEYSSIYSQPK. The segment at 1–59 is disordered; sequence MDEYSSIYSQPKTPRLKQEGFPDSIGDQHEKALIDENGEEDKKMASTEGTTGDSRSTPL. The segment covering 16 to 45 has biased composition (basic and acidic residues); it reads LKQEGFPDSIGDQHEKALIDENGEEDKKMA. Over residues 47–59 the composition is skewed to polar residues; that stretch reads TEGTTGDSRSTPL. Serine 132 is subject to Phosphoserine. A Protein kinase domain is found at 192–508; the sequence is WKKVRPIGSG…INEIYESPFV (317 aa). Residues 198 to 206 and lysine 225 each bind ATP; that span reads IGSGNFSTV. Residue aspartate 354 is the Proton acceptor of the active site.

Belongs to the protein kinase superfamily. CAMK Ser/Thr protein kinase family. NIM1 subfamily.

Its subcellular location is the cytoplasm. It catalyses the reaction L-seryl-[protein] + ATP = O-phospho-L-seryl-[protein] + ADP + H(+). The enzyme catalyses L-threonyl-[protein] + ATP = O-phospho-L-threonyl-[protein] + ADP + H(+). Its function is as follows. Protein kinase that functions as a regulator in the pheromone-induced mating pathway downstream of mitogen-activated protein kinase (MAPK) FUS3. Diminishes transcriptional induction of genes in response to pheromone signaling. The protein is Serine/threonine-protein kinase PRR1 (PRR1) of Saccharomyces cerevisiae (strain ATCC 204508 / S288c) (Baker's yeast).